A 131-amino-acid chain; its full sequence is D-ribose pyranase (131 aa).

The active-site Proton donor is the His-20. Residues Asp-28, His-98, and 120 to 122 contribute to the substrate site; that span reads YSN.

It belongs to the RbsD / FucU family. RbsD subfamily. In terms of assembly, homodecamer.

The protein localises to the cytoplasm. The catalysed reaction is beta-D-ribopyranose = beta-D-ribofuranose. Its pathway is carbohydrate metabolism; D-ribose degradation; D-ribose 5-phosphate from beta-D-ribopyranose: step 1/2. Its function is as follows. Catalyzes the interconversion of beta-pyran and beta-furan forms of D-ribose. This is D-ribose pyranase from Lactobacillus gasseri (strain ATCC 33323 / DSM 20243 / BCRC 14619 / CIP 102991 / JCM 1131 / KCTC 3163 / NCIMB 11718 / NCTC 13722 / AM63).